The sequence spans 442 residues: Protein translocase subunit SecY (442 aa).

10 helical membrane-spanning segments follow: residues 29–49, 69–89, 126–146, 153–173, 182–202, 217–237, 274–294, 320–340, 377–397, and 400–420; these read LITI…VPDI, IFTG…LPYI, YIAF…LLRP, PLFI…VMWI, IGNG…PQTL, ITAV…IVFV, VMPI…AGFA, VYTV…ASLI, LTFL…FVEQ, and GVTT…GVAI.

The protein belongs to the SecY/SEC61-alpha family. In terms of assembly, component of the Sec protein translocase complex. Heterotrimer consisting of SecY, SecE and SecG subunits. The heterotrimers can form oligomers, although 1 heterotrimer is thought to be able to translocate proteins. Interacts with the ribosome. Interacts with SecDF, and other proteins may be involved. Interacts with SecA.

It is found in the cell inner membrane. Its subcellular location is the cellular thylakoid membrane. Functionally, the central subunit of the protein translocation channel SecYEG. Consists of two halves formed by TMs 1-5 and 6-10. These two domains form a lateral gate at the front which open onto the bilayer between TMs 2 and 7, and are clamped together by SecE at the back. The channel is closed by both a pore ring composed of hydrophobic SecY resides and a short helix (helix 2A) on the extracellular side of the membrane which forms a plug. The plug probably moves laterally to allow the channel to open. The ring and the pore may move independently. The polypeptide is Protein translocase subunit SecY (Synechocystis sp. (strain ATCC 27184 / PCC 6803 / Kazusa)).